The chain runs to 109 residues: Large ribosomal subunit protein uL22 (109 aa).

The protein belongs to the universal ribosomal protein uL22 family. As to quaternary structure, part of the 50S ribosomal subunit.

This protein binds specifically to 23S rRNA; its binding is stimulated by other ribosomal proteins, e.g. L4, L17, and L20. It is important during the early stages of 50S assembly. It makes multiple contacts with different domains of the 23S rRNA in the assembled 50S subunit and ribosome. In terms of biological role, the globular domain of the protein is located near the polypeptide exit tunnel on the outside of the subunit, while an extended beta-hairpin is found that lines the wall of the exit tunnel in the center of the 70S ribosome. The protein is Large ribosomal subunit protein uL22 of Psychrobacter sp. (strain PRwf-1).